Consider the following 301-residue polypeptide: MALTIGVLGGGAWGSTLAGLLSQGGHRVQIWRREHGPQALQALAASEVLVGATALVGVSGMAQQIKGWSARPIVSCSKGLDPSSGQTASALWKAACPLWPVVVLSGPNLASELQQGLPAASVLAGHDEGLLSTLQQQLSTEQFRLYRNNDPLGTELAGALKNVMAVAAGICDGLQLGANARASLLTRALAEMATVLHGLGGRQDTLYGLAGIGDLLATATSPLSRNYRFGLCMADGLDRQQALEKVGATVEGVPTCEAIASLGRQKQWSLPITESVALLLQGALSPAQALQQLMQRELRCE.

Positions 13, 33, and 78 each coordinate NADPH. Residues lysine 78 and glycine 106 each contribute to the sn-glycerol 3-phosphate site. Alanine 110 contacts NADPH. The sn-glycerol 3-phosphate site is built by lysine 161, aspartate 214, serine 224, arginine 225, and asparagine 226. Lysine 161 functions as the Proton acceptor in the catalytic mechanism. Residue arginine 225 coordinates NADPH. An NADPH-binding site is contributed by glutamate 251.

The protein belongs to the NAD-dependent glycerol-3-phosphate dehydrogenase family.

It localises to the cytoplasm. The catalysed reaction is sn-glycerol 3-phosphate + NAD(+) = dihydroxyacetone phosphate + NADH + H(+). It carries out the reaction sn-glycerol 3-phosphate + NADP(+) = dihydroxyacetone phosphate + NADPH + H(+). It participates in membrane lipid metabolism; glycerophospholipid metabolism. Its function is as follows. Catalyzes the reduction of the glycolytic intermediate dihydroxyacetone phosphate (DHAP) to sn-glycerol 3-phosphate (G3P), the key precursor for phospholipid synthesis. The chain is Glycerol-3-phosphate dehydrogenase [NAD(P)+] from Synechococcus sp. (strain RCC307).